Consider the following 289-residue polypeptide: Porin (289 aa).

Homotrimer.

It localises to the cell outer membrane. Its function is as follows. Forms channels that allow the passive diffusion of small hydrophilic solutes up to an exclusion limit of about 0.6 kDa. The chain is Porin (opmA) from Fuscovulum blasticum (Rhodobacter blasticus).